The primary structure comprises 412 residues: uncharacterized protein (412 aa).

Tandem repeats lie at residues 112–116, 117–121, 122–126, 127–131, 132–136, 137–141, and 142–146. The 7 X 5 AA tandem repeats of G-[NS]-[IV]-R-[DS] stretch occupies residues 112–146; that stretch reads GSIRSGSIRSGSIRDGSIRDGSIRSGNIRDGSVRS. Residues 116–126 show a composition bias toward low complexity; the sequence is SGSIRSGSIRD. The segment at 116–209 is disordered; sequence SGSIRSGSIR…SEKSIKPSTK (94 aa). The segment covering 192 to 209 has biased composition (basic and acidic residues); it reads NHYAESEYSEKSIKPSTK.

It belongs to the asfivirus B407L family.

This is an uncharacterized protein from Ornithodoros (relapsing fever ticks).